The following is a 29-amino-acid chain: Cyclotide vibi-C (29 aa).

The segment at residues 1-29 is a cross-link (cyclopeptide (Gly-Asn)); the sequence is GLPVCGETCAFGSCYTPGCSCSWPVCTRN. 3 disulfide bridges follow: C5–C19, C9–C21, and C14–C26.

Post-translationally, this is a cyclic peptide.

Its function is as follows. Probably participates in a plant defense mechanism. In Viola biflora (Yellow wood violet), this protein is Cyclotide vibi-C.